Consider the following 564-residue polypeptide: Arginine--tRNA ligase (564 aa).

Residues 122–132 (PNIAKPFSIGH) carry the 'HIGH' region motif.

This sequence belongs to the class-I aminoacyl-tRNA synthetase family. In terms of assembly, monomer.

The protein localises to the cytoplasm. The enzyme catalyses tRNA(Arg) + L-arginine + ATP = L-arginyl-tRNA(Arg) + AMP + diphosphate. This chain is Arginine--tRNA ligase, found in Lactococcus lactis subsp. cremoris (strain SK11).